The following is a 270-amino-acid chain: Ethanolamine ammonia-lyase small subunit (270 aa).

Val-166, Glu-187, and Cys-216 together coordinate adenosylcob(III)alamin.

This sequence belongs to the EutC family. In terms of assembly, the basic unit is a heterodimer which dimerizes to form tetramers. The heterotetramers trimerize; 6 large subunits form a core ring with 6 small subunits projecting outwards. Requires adenosylcob(III)alamin as cofactor.

The protein localises to the bacterial microcompartment. It catalyses the reaction ethanolamine = acetaldehyde + NH4(+). Its pathway is amine and polyamine degradation; ethanolamine degradation. Its function is as follows. Catalyzes the deamination of various vicinal amino-alcohols to oxo compounds. Allows this organism to utilize ethanolamine as the sole source of nitrogen and carbon in the presence of external vitamin B12. This chain is Ethanolamine ammonia-lyase small subunit, found in Ralstonia nicotianae (strain ATCC BAA-1114 / GMI1000) (Ralstonia solanacearum).